The following is a 274-amino-acid chain: Protein LNK4 (274 aa).

The interval 209 to 249 (NSQQKSDSNSDEFLEDRTRETEFETKLNRQSRGQSHIQQDG) is disordered. A compositionally biased stretch (basic and acidic residues) spans 223–235 (EDRTRETEFETKL). Positions 236–249 (NRQSRGQSHIQQDG) are enriched in polar residues.

As to quaternary structure, interacts with REV8.

Functionally, probable transcriptional coactivator. The chain is Protein LNK4 from Arabidopsis thaliana (Mouse-ear cress).